The following is a 232-amino-acid chain: 5'-methylthioadenosine/S-adenosylhomocysteine nucleosidase (232 aa).

Glu12 acts as the Proton acceptor in catalysis. Residues Gly78, Met153, and 174–175 (ME) contribute to the substrate site. Catalysis depends on Asp198, which acts as the Proton donor.

Belongs to the PNP/UDP phosphorylase family. MtnN subfamily.

The enzyme catalyses S-adenosyl-L-homocysteine + H2O = S-(5-deoxy-D-ribos-5-yl)-L-homocysteine + adenine. It carries out the reaction S-methyl-5'-thioadenosine + H2O = 5-(methylsulfanyl)-D-ribose + adenine. The catalysed reaction is 5'-deoxyadenosine + H2O = 5-deoxy-D-ribose + adenine. Its pathway is amino-acid biosynthesis; L-methionine biosynthesis via salvage pathway; S-methyl-5-thio-alpha-D-ribose 1-phosphate from S-methyl-5'-thioadenosine (hydrolase route): step 1/2. Catalyzes the irreversible cleavage of the glycosidic bond in both 5'-methylthioadenosine (MTA) and S-adenosylhomocysteine (SAH/AdoHcy) to adenine and the corresponding thioribose, 5'-methylthioribose and S-ribosylhomocysteine, respectively. Also cleaves 5'-deoxyadenosine, a toxic by-product of radical S-adenosylmethionine (SAM) enzymes, into 5-deoxyribose and adenine. The protein is 5'-methylthioadenosine/S-adenosylhomocysteine nucleosidase of Hydrogenovibrio crunogenus (strain DSM 25203 / XCL-2) (Thiomicrospira crunogena).